The chain runs to 216 residues: Peroxiredoxin (216 aa).

Positions 2–158 (VVIGEKFPEV…ILRLVKALKI (157 aa)) constitute a Thioredoxin domain. Residue Cys-46 is the Cysteine sulfenic acid (-SOH) intermediate of the active site. Position 121 (Arg-121) interacts with substrate. An intrachain disulfide couples Cys-205 to Cys-211.

This sequence belongs to the peroxiredoxin family. Prx6 subfamily. As to quaternary structure, homodecamer. Pentamer of dimers that assemble into a ring structure.

It localises to the cytoplasm. It carries out the reaction a hydroperoxide + [thioredoxin]-dithiol = an alcohol + [thioredoxin]-disulfide + H2O. Thiol-specific peroxidase that catalyzes the reduction of hydrogen peroxide and organic hydroperoxides to water and alcohols, respectively. Plays a role in cell protection against oxidative stress by detoxifying peroxides. This chain is Peroxiredoxin, found in Pyrococcus abyssi (strain GE5 / Orsay).